The chain runs to 714 residues: Fatty acid oxidation complex subunit alpha (714 aa).

Residues 1 to 190 (MEMASAFTLN…KLGLVDDVVP (190 aa)) are enoyl-CoA hydratase. The segment at 306-714 (APLNSVGILG…FWKTTATDLQ (409 aa)) is 3-hydroxyacyl-CoA dehydrogenase.

This sequence in the N-terminal section; belongs to the enoyl-CoA hydratase/isomerase family. It in the central section; belongs to the 3-hydroxyacyl-CoA dehydrogenase family. Heterotetramer of two alpha chains (FadJ) and two beta chains (FadI).

The protein resides in the cytoplasm. The enzyme catalyses a (3S)-3-hydroxyacyl-CoA = a (2E)-enoyl-CoA + H2O. It carries out the reaction a 4-saturated-(3S)-3-hydroxyacyl-CoA = a (3E)-enoyl-CoA + H2O. It catalyses the reaction a (3S)-3-hydroxyacyl-CoA + NAD(+) = a 3-oxoacyl-CoA + NADH + H(+). The catalysed reaction is (3S)-3-hydroxybutanoyl-CoA = (3R)-3-hydroxybutanoyl-CoA. It functions in the pathway lipid metabolism; fatty acid beta-oxidation. Functionally, catalyzes the formation of a hydroxyacyl-CoA by addition of water on enoyl-CoA. Also exhibits 3-hydroxyacyl-CoA epimerase and 3-hydroxyacyl-CoA dehydrogenase activities. This chain is Fatty acid oxidation complex subunit alpha, found in Shigella boydii serotype 18 (strain CDC 3083-94 / BS512).